The chain runs to 304 residues: Murein tetrapeptide carboxypeptidase (304 aa).

The active-site Nucleophile is the serine 106. Catalysis depends on charge relay system residues glutamate 200 and histidine 270.

This sequence belongs to the peptidase S66 family.

The protein localises to the cytoplasm. It carries out the reaction N-acetyl-D-glucosaminyl-N-acetylmuramoyl-L-alanyl-meso-2,6-diaminoheptanedioyl-D-alanine + H2O = N-acetyl-D-glucosaminyl-N-acetylmuramoyl-L-alanyl-meso-2,6-diaminoheptanedioate + D-alanine. The protein operates within cell wall biogenesis; peptidoglycan recycling. With respect to regulation, inhibited by beta-lactams containing a D-amino acid side chain. In terms of biological role, releases the terminal D-alanine residue from the cytoplasmic tetrapeptide recycling product L-Ala-gamma-D-Glu-meso-Dap-D-Ala. To a lesser extent, can also cleave D-Ala from murein derivatives containing the tetrapeptide, i.e. MurNAc-tetrapeptide, UDP-MurNAc-tetrapeptide, GlcNAc-MurNAc-tetrapeptide, and GlcNAc-anhMurNAc-tetrapeptide. Does not act on murein sacculi or cross-linked muropeptides. The tripeptides produced by the LcdA reaction can then be reused as peptidoglycan building blocks; LcdA is thereby involved in murein recycling. Is also essential for viability during stationary phase. This Escherichia coli (strain K12) protein is Murein tetrapeptide carboxypeptidase (ldcA).